A 214-amino-acid chain; its full sequence is Large ribosomal subunit protein uL3 (214 aa).

Residues 134 to 153 (ATHGNSLSHRAPGSIGQNQT) form a disordered region. At Gln-152 the chain carries N5-methylglutamine.

Belongs to the universal ribosomal protein uL3 family. As to quaternary structure, part of the 50S ribosomal subunit. Forms a cluster with proteins L14 and L19. Post-translationally, methylated by PrmB.

Functionally, one of the primary rRNA binding proteins, it binds directly near the 3'-end of the 23S rRNA, where it nucleates assembly of the 50S subunit. This is Large ribosomal subunit protein uL3 from Buchnera aphidicola subsp. Baizongia pistaciae (strain Bp).